A 295-amino-acid polypeptide reads, in one-letter code: Acetyl-coenzyme A carboxylase carboxyl transferase subunit beta (295 aa).

The segment at 1–20 is disordered; it reads MSWLSKLMPSGIRTENTPAK. A CoA carboxyltransferase N-terminal domain is found at 28–295; the sequence is LWEKCSNCGS…QPHPQDADAA (268 aa). Zn(2+) is bound by residues Cys32, Cys35, Cys51, and Cys54. A C4-type zinc finger spans residues 32 to 54; it reads CSNCGSALYGPELEENLEVCPKC.

This sequence belongs to the AccD/PCCB family. In terms of assembly, acetyl-CoA carboxylase is a heterohexamer composed of biotin carboxyl carrier protein (AccB), biotin carboxylase (AccC) and two subunits each of ACCase subunit alpha (AccA) and ACCase subunit beta (AccD). It depends on Zn(2+) as a cofactor.

It is found in the cytoplasm. It carries out the reaction N(6)-carboxybiotinyl-L-lysyl-[protein] + acetyl-CoA = N(6)-biotinyl-L-lysyl-[protein] + malonyl-CoA. The protein operates within lipid metabolism; malonyl-CoA biosynthesis; malonyl-CoA from acetyl-CoA: step 1/1. Its function is as follows. Component of the acetyl coenzyme A carboxylase (ACC) complex. Biotin carboxylase (BC) catalyzes the carboxylation of biotin on its carrier protein (BCCP) and then the CO(2) group is transferred by the transcarboxylase to acetyl-CoA to form malonyl-CoA. The sequence is that of Acetyl-coenzyme A carboxylase carboxyl transferase subunit beta from Xanthomonas campestris pv. campestris (strain B100).